A 181-amino-acid polypeptide reads, in one-letter code: Acireductone dioxygenase (181 aa).

4 residues coordinate Fe(2+): histidine 97, histidine 99, glutamate 103, and histidine 141. Histidine 97, histidine 99, glutamate 103, and histidine 141 together coordinate Ni(2+).

Belongs to the acireductone dioxygenase (ARD) family. Monomer. The cofactor is Fe(2+). Ni(2+) serves as cofactor.

The catalysed reaction is 1,2-dihydroxy-5-(methylsulfanyl)pent-1-en-3-one + O2 = 3-(methylsulfanyl)propanoate + CO + formate + 2 H(+). The enzyme catalyses 1,2-dihydroxy-5-(methylsulfanyl)pent-1-en-3-one + O2 = 4-methylsulfanyl-2-oxobutanoate + formate + 2 H(+). It functions in the pathway amino-acid biosynthesis; L-methionine biosynthesis via salvage pathway; L-methionine from S-methyl-5-thio-alpha-D-ribose 1-phosphate: step 5/6. Catalyzes 2 different reactions between oxygen and the acireductone 1,2-dihydroxy-3-keto-5-methylthiopentene (DHK-MTPene) depending upon the metal bound in the active site. Fe-containing acireductone dioxygenase (Fe-ARD) produces formate and 2-keto-4-methylthiobutyrate (KMTB), the alpha-ketoacid precursor of methionine in the methionine recycle pathway. Ni-containing acireductone dioxygenase (Ni-ARD) produces methylthiopropionate, carbon monoxide and formate, and does not lie on the methionine recycle pathway. This is Acireductone dioxygenase from Pseudomonas syringae pv. tomato (strain ATCC BAA-871 / DC3000).